Reading from the N-terminus, the 257-residue chain is Major prion protein (257 aa).

Positions 1–24 (MVKSHIGGWILVLFVAAWSDIGLC) are cleaved as a signal peptide. An interaction with GRB2, ERI3 and SYN1 region spans residues 25–234 (KKRPKPGGGW…EYEAYAQRGA (210 aa)). The tract at residues 28–113 (PKPGGGWNTG…NKPSKPKTNM (86 aa)) is disordered. 5 tandem repeats follow at residues 54 to 62 (PQGGGGWGQ), 63 to 70 (PHGGGWGQ), 71 to 78 (PHGGGWGQ), 79 to 86 (PHGGGWGQ), and 87 to 95 (PHGGGGWGQ). The interval 54–95 (PQGGGGWGQPHGGGWGQPHGGGWGQPHGGGWGQPHGGGGWGQ) is 5 X 8 AA tandem repeats of P-H-G-G-G-W-G-Q. Residues 55-100 (QGGGGWGQPHGGGWGQPHGGGWGQPHGGGWGQPHGGGGWGQGGGSH) are compositionally biased toward gly residues. The Cu(2+) site is built by H64, G65, G66, H72, G73, G74, H80, G81, G82, H88, G90, and G91. C183 and C218 are joined by a disulfide. N185 and N201 each carry an N-linked (GlcNAc...) asparagine glycan. A234 carries GPI-anchor amidated alanine lipidation. Positions 235–257 (SVILFSSPPVILLISFLLFLIVG) are cleaved as a propeptide — removed in mature form.

The protein belongs to the prion family. Monomer and homodimer. Has a tendency to aggregate into amyloid fibrils containing a cross-beta spine, formed by a steric zipper of superposed beta-strands. Soluble oligomers may represent an intermediate stage on the path to fibril formation. Copper binding may promote oligomerization. Interacts with GRB2, APP, ERI3/PRNPIP and SYN1. Mislocalized cytosolically exposed PrP interacts with MGRN1; this interaction alters MGRN1 subcellular location and causes lysosomal enlargement. Interacts with KIAA1191.

The protein resides in the cell membrane. It is found in the golgi apparatus. Its function is as follows. Its primary physiological function is unclear. Has cytoprotective activity against internal or environmental stresses. May play a role in neuronal development and synaptic plasticity. May be required for neuronal myelin sheath maintenance. May play a role in iron uptake and iron homeostasis. Soluble oligomers are toxic to cultured neuroblastoma cells and induce apoptosis (in vitro). Association with GPC1 (via its heparan sulfate chains) targets PRNP to lipid rafts. Also provides Cu(2+) or Zn(2+) for the ascorbate-mediated GPC1 deaminase degradation of its heparan sulfate side chains. The polypeptide is Major prion protein (PRNP) (Sus scrofa (Pig)).